Consider the following 73-residue polypeptide: Venom protein 55.1 (73 aa).

Positions 1–19 (MNFLCILFVVSLISSLSKC) are cleaved as a signal peptide. P57 carries the proline amide modification. The propeptide occupies 61 to 73 (RRSFDLYALVNAK).

Belongs to the diuretic hormone class 2 family. As to expression, expressed by the venom gland.

The protein resides in the secreted. Regulates fluid secretion. The chain is Venom protein 55.1 from Lychas mucronatus (Chinese swimming scorpion).